A 419-amino-acid chain; its full sequence is L-rhamnose isomerase (419 aa).

3 residues coordinate Mn(2+): His262, Asp294, and Asp296.

It belongs to the rhamnose isomerase family. In terms of assembly, homotetramer. Mn(2+) is required as a cofactor.

Its subcellular location is the cytoplasm. The enzyme catalyses L-rhamnopyranose = L-rhamnulose. It participates in carbohydrate degradation; L-rhamnose degradation; glycerone phosphate from L-rhamnose: step 1/3. Its function is as follows. Catalyzes the interconversion of L-rhamnose and L-rhamnulose. The chain is L-rhamnose isomerase from Escherichia coli (strain SMS-3-5 / SECEC).